The following is a 1074-amino-acid chain: MELPDSPPPLDAPSPPHFLDAPQDRWNVFYPAVQTLVNALGGYEEVESPPDSGIFETVYRPGDSVLGVLKDLKKLWRKDDEDDERTVARCMYRAELMKELVAIVVECAERGEWGRKVALVACDLIAALTWPIDVAQELKEIEDEGPVVTDYASLLRAQLEYKALFLKTTKPLKSILSLMVPCLAKPRKDEKDSRIISLGLHVVRNLLAIKDAVAEGTATGEKEEFAHLQSDLITQLDSLTYLQLFLTLASCADKTDLNPFNVIVLDILHLIFRGIKPSELVQDQKRVPIDSLARLLEKEKKQKALNSRVGSTRHSRFGTTITVKTAEQRVVLHRQTAIIENPGKILDMTKRKKAVVAKRMDDLTVFVNLSSDAMVILQSFSKSFLEICYNTFIESILRDIRMERTKIRPSDNIRVFYLSSFFIEYLLLLRHKLLEKGGSRRLEELPLGLVAQIAEMDSVKWLFARLRICWDDKPKAWTELQACIECFTQILLLIDDMSTSTNEEDVEVAEILQHQLYYNYDILDSALAVVREYKNQSIAYLDSIIHFAYVLLRMLEKYSKTKAFMFIRKRKNTHKKRKERQAASQANADREQRKIPEEYGDEGEEAFAPDEDAPSYAEHAFTFQSFEKRFAQEAVVNTLLTYLERFLEFDGPEPMKRVVGLMHRQVIKAHAEGLYFKVSTLIIFRRILDKQHVLPAAPSSRDLITLITYILRKFFKHVEKEPFTLVEALSSKSRGKWKTVGGGSDDDDDEMAGQRGRIKEKMGPVELQFIKKHKFSWSQQMSIAFAIIWGDGHGYLIKWIVEVLEQVLAAKQEIVLTTDGGINGDEDEEDEDGNARVRRFGRPSDEAISKFTQFDLQPEESEQITAVTSNPHFRLMLKLLSFDLPPPPMELDFEEDVSSEELALAREKSDSAWFLPANVLPSDIEASIGALKQYMEEPPTLDDDPKKLLRRKARATRRRRRSPSVESYDSETGEVRPGHQHKKNPRQKRAKKAVETQNYKSAAFIEDSDDEDPEATRRFFENEERLRREMDELAAQGGHPMMERGVKRKRGKKNGKGAISDTPPPSQRGNDRET.

Disordered regions lie at residues 572–595 and 936–1074; these read NTHKKRKERQAASQANADREQRKI and EEPP…DRET. Basic residues-rich tracts occupy residues 948–962 and 978–991; these read LLRRKARATRRRRRS and GHQHKKNPRQKRAK. A compositionally biased stretch (basic and acidic residues) spans 1014 to 1031; it reads EATRRFFENEERLRREMD. Residues 1046–1055 are compositionally biased toward basic residues; that stretch reads VKRKRGKKNG.

Belongs to the timeless family.

Its subcellular location is the nucleus. Its function is as follows. Involved in chromosome segregation during meiosis and DNA damage repair. This chain is Topoisomerase 1-associated factor 1 (TOF1), found in Cryptococcus neoformans var. neoformans serotype D (strain JEC21 / ATCC MYA-565) (Filobasidiella neoformans).